The sequence spans 329 residues: Phenylalanine--tRNA ligase alpha subunit (329 aa).

Glu-254 contributes to the Mg(2+) binding site.

It belongs to the class-II aminoacyl-tRNA synthetase family. Phe-tRNA synthetase alpha subunit type 1 subfamily. As to quaternary structure, tetramer of two alpha and two beta subunits. Requires Mg(2+) as cofactor.

The protein resides in the cytoplasm. The catalysed reaction is tRNA(Phe) + L-phenylalanine + ATP = L-phenylalanyl-tRNA(Phe) + AMP + diphosphate + H(+). The protein is Phenylalanine--tRNA ligase alpha subunit of Haemophilus influenzae (strain 86-028NP).